Here is a 210-residue protein sequence, read N- to C-terminus: ATP-dependent Clp protease proteolytic subunit (210 aa).

Ser-111 (nucleophile) is an active-site residue. His-136 is a catalytic residue.

It belongs to the peptidase S14 family. In terms of assembly, fourteen ClpP subunits assemble into 2 heptameric rings which stack back to back to give a disk-like structure with a central cavity, resembling the structure of eukaryotic proteasomes.

Its subcellular location is the cytoplasm. It catalyses the reaction Hydrolysis of proteins to small peptides in the presence of ATP and magnesium. alpha-casein is the usual test substrate. In the absence of ATP, only oligopeptides shorter than five residues are hydrolyzed (such as succinyl-Leu-Tyr-|-NHMec, and Leu-Tyr-Leu-|-Tyr-Trp, in which cleavage of the -Tyr-|-Leu- and -Tyr-|-Trp bonds also occurs).. Its function is as follows. Cleaves peptides in various proteins in a process that requires ATP hydrolysis. Has a chymotrypsin-like activity. Plays a major role in the degradation of misfolded proteins. The polypeptide is ATP-dependent Clp protease proteolytic subunit (Halorhodospira halophila (strain DSM 244 / SL1) (Ectothiorhodospira halophila (strain DSM 244 / SL1))).